A 570-amino-acid polypeptide reads, in one-letter code: Proline--tRNA ligase (570 aa).

It belongs to the class-II aminoacyl-tRNA synthetase family. ProS type 1 subfamily. In terms of assembly, homodimer.

It localises to the cytoplasm. It carries out the reaction tRNA(Pro) + L-proline + ATP = L-prolyl-tRNA(Pro) + AMP + diphosphate. Its function is as follows. Catalyzes the attachment of proline to tRNA(Pro) in a two-step reaction: proline is first activated by ATP to form Pro-AMP and then transferred to the acceptor end of tRNA(Pro). As ProRS can inadvertently accommodate and process non-cognate amino acids such as alanine and cysteine, to avoid such errors it has two additional distinct editing activities against alanine. One activity is designated as 'pretransfer' editing and involves the tRNA(Pro)-independent hydrolysis of activated Ala-AMP. The other activity is designated 'posttransfer' editing and involves deacylation of mischarged Ala-tRNA(Pro). The misacylated Cys-tRNA(Pro) is not edited by ProRS. This is Proline--tRNA ligase from Neisseria meningitidis serogroup C / serotype 2a (strain ATCC 700532 / DSM 15464 / FAM18).